Consider the following 425-residue polypeptide: Glutamate-1-semialdehyde 2,1-aminomutase (425 aa).

Residue Lys-264 is modified to N6-(pyridoxal phosphate)lysine.

It belongs to the class-III pyridoxal-phosphate-dependent aminotransferase family. HemL subfamily. In terms of assembly, homodimer. Pyridoxal 5'-phosphate is required as a cofactor.

Its subcellular location is the cytoplasm. It carries out the reaction (S)-4-amino-5-oxopentanoate = 5-aminolevulinate. It functions in the pathway porphyrin-containing compound metabolism; protoporphyrin-IX biosynthesis; 5-aminolevulinate from L-glutamyl-tRNA(Glu): step 2/2. The sequence is that of Glutamate-1-semialdehyde 2,1-aminomutase from Hydrogenobaculum sp. (strain Y04AAS1).